The sequence spans 510 residues: MSAKKPLALVILDGYGYREDTASNAIANAKTPVMDALIANNPHTLISASGMDVGLPDGQMGNSEVGHTNIGAGRVVYQDLTRITKSIADGEFEQTPALVEAIDAAVKAEKAVHIMGLMSPGGVHSHEDHIYAAVEMAAARGAEKIYLHCFLDGRDTPPRSAENSLQRFQDLFAKLGKGRVASLVGRYYAMDRDNNWERVQVAYDLLTQAKAEFTAETAVAGLEAAYARDENDEFVKATAIKAEGQEDAIMQDGDAVIFMNYRADRARQITRAFVPGFDGFERAVFPAINFVMLTQYAADIPLATAFPPASLENTYGEWLSKQGQTQLRISETEKYAHVTFFFNGGVENEFEGEERQLVASPKVATYDLQPEMSSPELTEKLVAAIKSGKYDTIICNYPNADMVGHTGVYEAAEKAIEALDESVGKVVEAIKEVGGQLLITADHGNAEMMIDPETGGVHTAHTNLPVPLIYVGDKAVEFKEGGKLSDLAPTMLSLAGLEIPAEMSGDVLVK.

Asp-13 and Ser-63 together coordinate Mn(2+). The Phosphoserine intermediate role is filled by Ser-63. Residues His-124, 154 to 155, Arg-186, Arg-192, 262 to 265, and Lys-334 contribute to the substrate site; these read RD and RADR. Asp-401, His-405, Asp-442, His-443, and His-461 together coordinate Mn(2+).

This sequence belongs to the BPG-independent phosphoglycerate mutase family. In terms of assembly, monomer. Mn(2+) is required as a cofactor.

The enzyme catalyses (2R)-2-phosphoglycerate = (2R)-3-phosphoglycerate. It participates in carbohydrate degradation; glycolysis; pyruvate from D-glyceraldehyde 3-phosphate: step 3/5. Catalyzes the interconversion of 2-phosphoglycerate and 3-phosphoglycerate. This Vibrio parahaemolyticus serotype O3:K6 (strain RIMD 2210633) protein is 2,3-bisphosphoglycerate-independent phosphoglycerate mutase.